The following is a 360-amino-acid chain: Peptide chain release factor 1 (360 aa).

Glutamine 235 is subject to N5-methylglutamine. Residues 283-308 (MQKRQQAEASERRNLLGSGDRSDRNR) are compositionally biased toward basic and acidic residues. Positions 283 to 313 (MQKRQQAEASERRNLLGSGDRSDRNRTYNFP) are disordered.

It belongs to the prokaryotic/mitochondrial release factor family. Post-translationally, methylated by PrmC. Methylation increases the termination efficiency of RF1.

The protein resides in the cytoplasm. Its function is as follows. Peptide chain release factor 1 directs the termination of translation in response to the peptide chain termination codons UAG and UAA. This is Peptide chain release factor 1 from Yersinia enterocolitica serotype O:8 / biotype 1B (strain NCTC 13174 / 8081).